The sequence spans 2226 residues: DNA polymerase epsilon catalytic subunit A (2226 aa).

The interval 1240–1265 (RVSKVTSRKRRNGKANNVSDSEEEER) is disordered. The Zn(2+) site is built by C2112, C2115, C2134, and C2137. The CysA-type zinc-finger motif lies at 2112–2137 (CDYCNYIRDIDFCRDEQKNIWNCSNC). [4Fe-4S] cluster is bound by residues C2168, C2171, C2183, and C2185. The short motif at 2168 to 2185 (CSKCHQIKSDNMSEYCKC) is the CysB motif element.

This sequence belongs to the DNA polymerase type-B family. As to quaternary structure, heterotetramer. Consists of 4 subunits: POL2, DPB2, DPB3 and DPB4. [4Fe-4S] cluster is required as a cofactor.

It localises to the nucleus. It carries out the reaction DNA(n) + a 2'-deoxyribonucleoside 5'-triphosphate = DNA(n+1) + diphosphate. DNA polymerase II participates in chromosomal DNA replication. The protein is DNA polymerase epsilon catalytic subunit A (POL2) of Debaryomyces hansenii (strain ATCC 36239 / CBS 767 / BCRC 21394 / JCM 1990 / NBRC 0083 / IGC 2968) (Yeast).